Reading from the N-terminus, the 170-residue chain is Photosystem I assembly protein Ycf3 (170 aa).

TPR repeat units lie at residues 35 to 68 (AFTY…EIDP), 72 to 105 (SYIL…NPFL), and 120 to 153 (GEQA…TPGN).

It belongs to the Ycf3 family.

The protein resides in the plastid. It is found in the chloroplast thylakoid membrane. Functionally, essential for the assembly of the photosystem I (PSI) complex. May act as a chaperone-like factor to guide the assembly of the PSI subunits. This Triticum aestivum (Wheat) protein is Photosystem I assembly protein Ycf3.